A 217-amino-acid polypeptide reads, in one-letter code: Uracil-DNA glycosylase (217 aa).

The Proton acceptor role is filled by D62.

The protein belongs to the uracil-DNA glycosylase (UDG) superfamily. UNG family.

The protein resides in the cytoplasm. The catalysed reaction is Hydrolyzes single-stranded DNA or mismatched double-stranded DNA and polynucleotides, releasing free uracil.. Its function is as follows. Excises uracil residues from the DNA which can arise as a result of misincorporation of dUMP residues by DNA polymerase or due to deamination of cytosine. The protein is Uracil-DNA glycosylase of Streptococcus pneumoniae (strain P1031).